A 139-amino-acid polypeptide reads, in one-letter code: uncharacterized protein (139 aa).

It to E.coli YebE.

This is an uncharacterized protein from Yersinia enterocolitica.